A 324-amino-acid chain; its full sequence is Concanavalin B (324 aa).

The first 25 residues, 1–25 (MGCERKALILMVVIWIMSFWTLSLA), serve as a signal peptide directing secretion. The GH18 domain maps to 30 to 311 (TEIAVYWGQR…TNIIRYLNAT (282 aa)). A glycan (N-linked (GlcNAc...) asparagine) is linked at Asn309.

It belongs to the glycosyl hydrolase 18 family.

Functionally, may act as a carbohydrate-binding protein. The polypeptide is Concanavalin B (Canavalia ensiformis (Jack bean)).